The chain runs to 158 residues: MLSPKRVKFRKQQRGRMRGVATRGNTIAFGEFALQAQECGWITSRQIEASRRAMTRYVKRGGKIWIRIFPDKPVTMRPAETRMGSGKGNPEFWVAVIKPGRILFEMGGEEITEEIAREAMRLAQYKLPIKTKFIGLDDQEKVAGSDKPASVPAITAES.

It belongs to the universal ribosomal protein uL16 family. In terms of assembly, part of the 50S ribosomal subunit.

Functionally, binds 23S rRNA and is also seen to make contacts with the A and possibly P site tRNAs. The polypeptide is Large ribosomal subunit protein uL16 (Prochlorococcus marinus (strain MIT 9303)).